The primary structure comprises 473 residues: MKKGRVSQVLGPVVDVRFEDGHLPEIYNAIKVTHKAQNENEVDIDLTLEVALHLGDDSVRTIAMASTDGVTRGMEAIDLGEPISVPVGNVTLGRVFNVLGENIDLDEPLPADAAKDPIHREAPKFDQLSTEVEILETGIKVVDLLAPYIKGGKIGLFGGAGVGKTVLIQELINNIAQEHGGISVFAGVGERTREGNDLYYEMKDSGVIGKTAMVFGQMNEPPGARMRVALTGLTMAEHFRDKEGQDVLFFIDNIFRFTQAGSEVSALLGRMPSAVGYQPTLATEMGQLQERITSTNVGSVTSIQAIYVPADDYTDPAPATTFAHLDATTNLERKLSEMGIYPAVDPLASTSRALSPEIVGEEHYEVARSVQQILQRYKELQDIIAMLGMDELSDEDKLVVSRARRVQFFLSQNFHVAEQFTGQKGSYVPVKETVKGFKEILEGKYDHLPEDAFRLVGRIEEVVEKAKEMGVEV.

G158–T165 contacts ATP.

The protein belongs to the ATPase alpha/beta chains family. F-type ATPases have 2 components, CF(1) - the catalytic core - and CF(0) - the membrane proton channel. CF(1) has five subunits: alpha(3), beta(3), gamma(1), delta(1), epsilon(1). CF(0) has three main subunits: a(1), b(2) and c(9-12). The alpha and beta chains form an alternating ring which encloses part of the gamma chain. CF(1) is attached to CF(0) by a central stalk formed by the gamma and epsilon chains, while a peripheral stalk is formed by the delta and b chains.

It is found in the cell membrane. The enzyme catalyses ATP + H2O + 4 H(+)(in) = ADP + phosphate + 5 H(+)(out). Its function is as follows. Produces ATP from ADP in the presence of a proton gradient across the membrane. The catalytic sites are hosted primarily by the beta subunits. The sequence is that of ATP synthase subunit beta from Bacillus licheniformis (strain ATCC 14580 / DSM 13 / JCM 2505 / CCUG 7422 / NBRC 12200 / NCIMB 9375 / NCTC 10341 / NRRL NRS-1264 / Gibson 46).